Reading from the N-terminus, the 125-residue chain is Putative superoxide reductase (125 aa).

Glu-12, His-14, His-40, His-46, Cys-110, and His-113 together coordinate Fe cation.

This sequence belongs to the desulfoferrodoxin family. It depends on Fe cation as a cofactor.

It carries out the reaction reduced [rubredoxin] + superoxide + 2 H(+) = oxidized [rubredoxin] + H2O2. Its function is as follows. Uses electrons from reduced NADP, by way of rubredoxin and an oxidoreductase, to catalyze the reduction of superoxide to hydrogen peroxide. The protein is Putative superoxide reductase of Archaeoglobus fulgidus (strain ATCC 49558 / DSM 4304 / JCM 9628 / NBRC 100126 / VC-16).